We begin with the raw amino-acid sequence, 1031 residues long: Protein translocase subunit SecA (1031 aa).

ATP is bound by residues Gln-143, 161–165, and Asp-662; that span reads GEGKT. Zn(2+) is bound by residues Cys-1015, Cys-1017, Cys-1026, and Cys-1027.

Belongs to the SecA family. Monomer and homodimer. Part of the essential Sec protein translocation apparatus which comprises SecA, SecYEG and auxiliary proteins SecDF. Other proteins may also be involved. Zn(2+) serves as cofactor.

It localises to the cell inner membrane. Its subcellular location is the cytoplasm. It carries out the reaction ATP + H2O + cellular proteinSide 1 = ADP + phosphate + cellular proteinSide 2.. Its function is as follows. Part of the Sec protein translocase complex. Interacts with the SecYEG preprotein conducting channel. Has a central role in coupling the hydrolysis of ATP to the transfer of proteins into and across the cell membrane, serving as an ATP-driven molecular motor driving the stepwise translocation of polypeptide chains across the membrane. The polypeptide is Protein translocase subunit SecA (Chlorobaculum tepidum (strain ATCC 49652 / DSM 12025 / NBRC 103806 / TLS) (Chlorobium tepidum)).